The chain runs to 328 residues: uncharacterized protein (328 aa).

This is an uncharacterized protein from Saccharomyces cerevisiae (strain ATCC 204508 / S288c) (Baker's yeast).